We begin with the raw amino-acid sequence, 414 residues long: MTQANLSETLFKPRFKHTETSTLVRRFNRGSQPPMQSALDGKNVPHWYRMINRLMWIWRGVDPREILDVQARIVMSDAERTDDDLYDTVIGYRGGNWIYEWAKQAMDWQQKACQEQDAMRSGRYWLHASTLYNIAAYPHLKGDELAEQAQALANRAYEEAAQRLPGSLREMEFAVPGGSPVTAFLHMPKGDGPFPTVLMCGGLDAMQIDYYTLYERYFAPRGIAMLTLDMPSVGFSSKWKLTQDSSLLHQHVLKALPNVPWVDHTRVAAFGFRFGANVAVRLAYLEAPRLKAVACLGPVVHALLSDPQRQSTVPEMYLDVLASRLGMHDASDEALRVELNRYSLKVQGLLGRRCPTPMLSGFWKNDPFSPEEESRLITTSSSDGKLIEIPFNPVYRNFDHALQEITDWINHRLC.

This sequence belongs to the FrsA family.

The enzyme catalyses a carboxylic ester + H2O = an alcohol + a carboxylate + H(+). Catalyzes the hydrolysis of esters. This is Esterase FrsA from Salmonella typhi.